Consider the following 59-residue polypeptide: Large ribosomal subunit protein bL32 (59 aa).

The protein belongs to the bacterial ribosomal protein bL32 family.

The polypeptide is Large ribosomal subunit protein bL32 (Mesoplasma florum (strain ATCC 33453 / NBRC 100688 / NCTC 11704 / L1) (Acholeplasma florum)).